Consider the following 525-residue polypeptide: Coronin-2A (525 aa).

WD repeat units follow at residues 24 to 71, 72 to 122, 123 to 170, 171 to 214, 215 to 259, 260 to 305, and 306 to 342; these read NCYD…TGKL, DPHY…RNLT, AYRK…SVIT, SPMS…AGTV, LQEA…DNLS, VPLM…ADKP, and HLSY…RFYK. Positions 485-524 form a coiled coil; it reads QMFYRQQEEIRRLRELLTQREVQAKQLELEIKNLRMGSEQ.

Belongs to the WD repeat coronin family. In terms of assembly, binds actin. Component of the N-Cor repressor complex, at least composed of NCOR1, NCOR2, HDAC3, TBL1X, TBL1R, CORO2A and GPS2.

The protein is Coronin-2A (CORO2A) of Homo sapiens (Human).